A 222-amino-acid polypeptide reads, in one-letter code: Pyridoxine/pyridoxamine 5'-phosphate oxidase (222 aa).

Residues 71–76 (RMVLLK), 86–87 (YT), K93, and Q115 contribute to the FMN site. Residue K76 coordinates substrate. 3 residues coordinate substrate: Y133, R137, and S141. FMN contacts are provided by residues 150-151 (QS) and W195. 201–203 (RLH) is a binding site for substrate. R205 is a binding site for FMN.

The protein belongs to the pyridoxamine 5'-phosphate oxidase family. In terms of assembly, homodimer. FMN serves as cofactor.

It catalyses the reaction pyridoxamine 5'-phosphate + O2 + H2O = pyridoxal 5'-phosphate + H2O2 + NH4(+). The enzyme catalyses pyridoxine 5'-phosphate + O2 = pyridoxal 5'-phosphate + H2O2. The protein operates within cofactor metabolism; pyridoxal 5'-phosphate salvage; pyridoxal 5'-phosphate from pyridoxamine 5'-phosphate: step 1/1. It functions in the pathway cofactor metabolism; pyridoxal 5'-phosphate salvage; pyridoxal 5'-phosphate from pyridoxine 5'-phosphate: step 1/1. Functionally, catalyzes the oxidation of either pyridoxine 5'-phosphate (PNP) or pyridoxamine 5'-phosphate (PMP) into pyridoxal 5'-phosphate (PLP). The protein is Pyridoxine/pyridoxamine 5'-phosphate oxidase of Caulobacter vibrioides (strain ATCC 19089 / CIP 103742 / CB 15) (Caulobacter crescentus).